Consider the following 347-residue polypeptide: N6-Methyl-AMP deaminase-L (347 aa).

2 residues coordinate Zn(2+): His19 and His21. N(6)-methyl-AMP-binding positions include His21, Asn23, His69, 101-104 (STPR), Asp142, and Gly175. His202 provides a ligand contact to Zn(2+). N(6)-methyl-AMP contacts are provided by Glu205, Asp283, and Asp284. Glu205 (proton donor) is an active-site residue. Asp283 provides a ligand contact to Zn(2+).

Belongs to the metallo-dependent hydrolases superfamily. Adenosine and AMP deaminases family. As to quaternary structure, monomer. Requires Zn(2+) as cofactor.

The enzyme catalyses N(6)-methyl-AMP + H2O + H(+) = IMP + methylamine. Functionally, catalyzes the hydrolysis of the free cytosolic methylated adenosine nucleotide N(6)-methyl-AMP (N6-mAMP) to produce inositol monophosphate (IMP) and methylamine. Is required for the catabolism of cytosolic N6-mAMP, which is derived from the degradation of mRNA containing N6-methylated adenine (m6A). This is N6-Methyl-AMP deaminase-L (mapda.L) from Xenopus laevis (African clawed frog).